Consider the following 681-residue polypeptide: GAS2-like protein 1 (681 aa).

An N-acetylalanine modification is found at alanine 2. In terms of domain architecture, Calponin-homology (CH) spans 27-148 (EAMKEDLAEW…CLLEVARRGA (122 aa)). Disordered stretches follow at residues 168–204 (LRAAPPAPNAPAAGEDTTETAPAPGTPARGPRMTPSD), 278–509 (STAH…PLQL), and 536–681 (ASVT…DSWM). Low complexity predominate over residues 186-199 (ETAPAPGTPARGPR). Threonine 193 bears the Phosphothreonine mark. The GAR domain occupies 203–275 (SDLRNLDELV…HYLDKHDPCR (73 aa)). The span at 291–303 (FSPQRVSPTTSPR) shows a compositional bias: polar residues. Phosphoserine is present on residues serine 306 and serine 316. Residues 327–342 (STKEGPETPPRPRDQL) show a composition bias toward basic and acidic residues. The residue at position 334 (threonine 334) is a Phosphothreonine. Phosphoserine occurs at positions 352 and 355. The span at 354–365 (DSDSSASSAQSG) shows a compositional bias: low complexity. Over residues 370 to 381 (RSDDTGTGPRRE) the composition is skewed to basic and acidic residues. Phosphothreonine is present on threonine 391. Position 394 is a phosphoserine (serine 394). Over residues 404 to 413 (QSRDRLDRGR) the composition is skewed to basic and acidic residues. A phosphoserine mark is found at serine 436, serine 438, serine 479, and serine 486. Over residues 437 to 454 (QSREEQAVLLVRRDRDGQ) the composition is skewed to basic and acidic residues. Low complexity predominate over residues 475–493 (PRARSPAAPRLSRVSSPSP). Omega-N-methylarginine is present on arginine 487. A phosphoserine mark is found at serine 490 and serine 492. A Phosphothreonine modification is found at threonine 498. An Omega-N-methylarginine modification is found at arginine 504. The segment covering 542 to 556 (GPVPDPARAPDPPAP) has biased composition (pro residues). Over residues 557-571 (DSAYCSSSSSSSSLS) the composition is skewed to low complexity. Arginine 633 bears the Omega-N-methylarginine mark. Residues 634 to 644 (GRMDTQPDRKP) show a composition bias toward basic and acidic residues. Serine 657 carries the post-translational modification Phosphoserine.

This sequence belongs to the GAS2 family. Interacts with MAPRE1.

The protein localises to the cytoplasm. Its subcellular location is the cytoskeleton. The protein resides in the stress fiber. Functionally, involved in the cross-linking of microtubules and microfilaments. Regulates microtubule dynamics and stability by interacting with microtubule plus-end tracking proteins, such as MAPRE1, to regulate microtubule growth along actin stress fibers. The chain is GAS2-like protein 1 (GAS2L1) from Homo sapiens (Human).